The sequence spans 638 residues: 1-deoxy-D-xylulose-5-phosphate synthase (638 aa).

Thiamine diphosphate contacts are provided by residues H72 and 113–115; that span reads GHA. D144 is a Mg(2+) binding site. Residues 145-146, N174, Y287, and E370 contribute to the thiamine diphosphate site; that span reads GA. N174 provides a ligand contact to Mg(2+).

The protein belongs to the transketolase family. DXPS subfamily. As to quaternary structure, homodimer. Mg(2+) is required as a cofactor. Thiamine diphosphate serves as cofactor.

It catalyses the reaction D-glyceraldehyde 3-phosphate + pyruvate + H(+) = 1-deoxy-D-xylulose 5-phosphate + CO2. Its pathway is metabolic intermediate biosynthesis; 1-deoxy-D-xylulose 5-phosphate biosynthesis; 1-deoxy-D-xylulose 5-phosphate from D-glyceraldehyde 3-phosphate and pyruvate: step 1/1. In terms of biological role, catalyzes the acyloin condensation reaction between C atoms 2 and 3 of pyruvate and glyceraldehyde 3-phosphate to yield 1-deoxy-D-xylulose-5-phosphate (DXP). The sequence is that of 1-deoxy-D-xylulose-5-phosphate synthase from Picosynechococcus sp. (strain ATCC 27264 / PCC 7002 / PR-6) (Agmenellum quadruplicatum).